The sequence spans 801 residues: PR domain zinc finger protein 4 (801 aa).

The region spanning 412–529 (KQLVLRQSIV…PENELLFYYS (118 aa)) is the SET domain. A C2H2-type 1; atypical zinc finger spans residues 545–566 (HLCNCGKECNSYTEFKAHLTSH). 4 consecutive C2H2-type zinc fingers follow at residues 618–640 (HKCD…LKIH), 646–668 (YRCT…MVIH), 674–696 (LKCD…VLIH), and 702–724 (IKCP…LNSH). The C2H2-type 6; atypical zinc-finger motif lies at 730-752 (YVCEKCTKAYLTKYHLTRHLKTC). The segment at 751-782 (TCKGPTSSSSAPEEEEEDDSEEEDLADSVGTE) is disordered. The segment covering 762–776 (PEEEEEDDSEEEDLA) has biased composition (acidic residues).

It belongs to the class V-like SAM-binding methyltransferase superfamily. In terms of tissue distribution, expressed in many tissues. Highly expressed in ovary, testis, pancreas, brain, heart and prostate.

The protein resides in the nucleus. In terms of biological role, may function as a transcription factor involved in cell differentiation. This is PR domain zinc finger protein 4 (PRDM4) from Homo sapiens (Human).